The primary structure comprises 37 residues: Diptericin (37 aa).

The segment at 1 to 37 (DLHIPPPDNKINWPQLSGGGGGSPKTGYDININAQQK) is disordered.

This sequence belongs to the attacin/sarcotoxin-2 family. As to expression, synthesized by the fat body and secreted into the hemolymph.

The protein localises to the secreted. Acute phase protein with antibacterial activity against the Gram-negative bacteria E.coli (MIC=6.25 ug/ml) and S.sonnei (MIC=12.5 ug/ml). Lacks antibacterial activity against the Gram-negative bacteria P.vulgaris, P.rettgeri and P.aeruginosa, and against the Gram-positive bacteria B.subtilis, S.aureus, M.luteus, B.megaterium, C.bovis and E.cloacae. In Sarcophaga peregrina (Flesh fly), this protein is Diptericin.